Reading from the N-terminus, the 156-residue chain is Small ribosomal subunit protein uS7 (156 aa).

The protein belongs to the universal ribosomal protein uS7 family. In terms of assembly, part of the 30S ribosomal subunit. Contacts proteins S9 and S11.

One of the primary rRNA binding proteins, it binds directly to 16S rRNA where it nucleates assembly of the head domain of the 30S subunit. Is located at the subunit interface close to the decoding center, probably blocks exit of the E-site tRNA. The sequence is that of Small ribosomal subunit protein uS7 from Synechococcus sp. (strain RCC307).